The sequence spans 277 residues: Shikimate dehydrogenase (NADP(+)) (277 aa).

Residues Ser15 to Ser17 and Thr62 contribute to the shikimate site. The active-site Proton acceptor is the Lys66. Positions 87 and 102 each coordinate shikimate. Residues Gly127–Ala131, Asn151–Lys156, and Ile219 each bind NADP(+). Tyr221 lines the shikimate pocket. Position 242 (Gly242) interacts with NADP(+).

This sequence belongs to the shikimate dehydrogenase family. In terms of assembly, homodimer.

The enzyme catalyses shikimate + NADP(+) = 3-dehydroshikimate + NADPH + H(+). Its pathway is metabolic intermediate biosynthesis; chorismate biosynthesis; chorismate from D-erythrose 4-phosphate and phosphoenolpyruvate: step 4/7. In terms of biological role, involved in the biosynthesis of the chorismate, which leads to the biosynthesis of aromatic amino acids. Catalyzes the reversible NADPH linked reduction of 3-dehydroshikimate (DHSA) to yield shikimate (SA). This is Shikimate dehydrogenase (NADP(+)) from Bacillus cereus (strain ZK / E33L).